The sequence spans 269 residues: RBPJ-interacting and tubulin-associated protein 1 (269 aa).

A Nuclear export signal motif is present at residues 5 to 17; sequence VELAVSGIQTLPL. Disordered regions lie at residues 37–101 and 141–269; these read SLFG…NKYR and FWTP…PPWK. The span at 62–77 shows a compositional bias: polar residues; that stretch reads RTSGVGTGTSRASGAN. Residues 79–93 show a composition bias toward low complexity; that stretch reads SCETTSSSGSTPTLT. Positions 92–108 match the Nuclear localization signal motif; the sequence is LTPRKKNKYRLISHTPS. Residues 128 to 156 are interaction with RBPJ/RBPSUH; it reads WMAKGDAAKLHSLFWTPPATPRGSHSPRP. An interaction with tubulin region spans residues 156 to 269; it reads PRETPLRAIH…ATQKPKPPWK (114 aa).

The protein belongs to the RITA family. In terms of assembly, interacts with RBPJ/RBPSUH.

Its subcellular location is the cytoplasm. The protein resides in the nucleus. It is found in the cytoskeleton. It localises to the microtubule organizing center. The protein localises to the centrosome. Its function is as follows. Tubulin-binding protein that acts as a negative regulator of Notch signaling pathway. Shuttles between the cytoplasm and the nucleus and mediates the nuclear export of RBPJ/RBPSUH, thereby preventing the interaction between RBPJ/RBPSUH and NICD product of Notch proteins (Notch intracellular domain), leading to down-regulate Notch-mediated transcription. May play a role in neurogenesis. This is RBPJ-interacting and tubulin-associated protein 1 (RITA1) from Ailuropoda melanoleuca (Giant panda).